The sequence spans 159 residues: U1 small nuclear ribonucleoprotein C (159 aa).

The Matrin-type zinc-finger motif lies at Phe4–Asp36. The interval Lys61 to Gly99 is disordered. Composition is skewed to pro residues over residues Pro63 to Gly74 and Gly84 to Gly99.

Belongs to the U1 small nuclear ribonucleoprotein C family. In terms of assembly, component of the U1 snRNP. The U1 snRNP is composed of the U1 snRNA and the 7 core Sm proteins snrpb, snrpd1, snrpd2, snrpd3, snrpe, snrpf and snrpg that assemble in a heptameric protein ring on the Sm site of the small nuclear RNA to form the core snRNP, and at least 3 U1 snRNP-specific proteins snrnp70/U1-70K, snrpa/U1-A and snrpc/U1-C. snrpc/U1-C interacts with U1 snRNA and the 5' splice-site region of the pre-mRNA.

It localises to the nucleus. Functionally, component of the spliceosomal U1 snRNP, which is essential for recognition of the pre-mRNA 5' splice-site and the subsequent assembly of the spliceosome. snrpc/U1-C is directly involved in initial 5' splice-site recognition for both constitutive and regulated alternative splicing. The interaction with the 5' splice-site seems to precede base-pairing between the pre-mRNA and the U1 snRNA. Stimulates commitment or early (E) complex formation by stabilizing the base pairing of the 5' end of the U1 snRNA and the 5' splice-site region. In Danio rerio (Zebrafish), this protein is U1 small nuclear ribonucleoprotein C.